The chain runs to 59 residues: Large ribosomal subunit protein bL32 (59 aa).

Residues 1–16 are compositionally biased toward basic residues; the sequence is MAVPKRKTSPSKRGMR. A disordered region spans residues 1–41; that stretch reads MAVPKRKTSPSKRGMRRSADALKAPTYIEDKNSGELRRPHH. Positions 28-41 are enriched in basic and acidic residues; it reads IEDKNSGELRRPHH.

This sequence belongs to the bacterial ribosomal protein bL32 family.

This chain is Large ribosomal subunit protein bL32, found in Bartonella henselae (strain ATCC 49882 / DSM 28221 / CCUG 30454 / Houston 1) (Rochalimaea henselae).